The chain runs to 377 residues: Nitric oxide reductase FlRd-NAD(+) reductase (377 aa).

This sequence belongs to the FAD-dependent oxidoreductase family. Requires FAD as cofactor.

It localises to the cytoplasm. It carries out the reaction 2 reduced [nitric oxide reductase rubredoxin domain] + NAD(+) + H(+) = 2 oxidized [nitric oxide reductase rubredoxin domain] + NADH. It functions in the pathway nitrogen metabolism; nitric oxide reduction. Functionally, one of at least two accessory proteins for anaerobic nitric oxide (NO) reductase. Reduces the rubredoxin moiety of NO reductase. The chain is Nitric oxide reductase FlRd-NAD(+) reductase from Escherichia coli O6:H1 (strain CFT073 / ATCC 700928 / UPEC).